The chain runs to 420 residues: Mitochondrial chaperone BCS1 (420 aa).

At 1–15 (MTLSDFIGALKDNPY) the chain is on the mitochondrial intermembrane side. The helical transmembrane segment at 16-32 (FGAGFGLVGVGTALAVA) threads the bilayer. Over 33–420 (RKGAQVGMIF…AIKNIAEIKD (388 aa)) the chain is Mitochondrial matrix. 230–237 (GPPGCGKS) provides a ligand contact to ATP.

This sequence belongs to the AAA ATPase family. BCS1 subfamily.

Its subcellular location is the mitochondrion inner membrane. The enzyme catalyses ATP + H2O = ADP + phosphate + H(+). Functionally, chaperone necessary for the incorporation of Rieske iron-sulfur protein uqcrfs1 into the mitochondrial respiratory chain complex III. The protein is Mitochondrial chaperone BCS1 (bcs1l) of Danio rerio (Zebrafish).